The chain runs to 349 residues: Protein-glutamate methylesterase/protein-glutamine glutaminase (349 aa).

Positions 5 to 122 (RVLSVDDSAL…REGMLAYNEM (118 aa)) constitute a Response regulatory domain. Asp-56 is modified (4-aspartylphosphate). The CheB-type methylesterase domain maps to 152–344 (LLSSEKLIAI…QQMLAKISAG (193 aa)). Residues Ser-164, His-190, and Asp-286 contribute to the active site.

It belongs to the CheB family. As to quaternary structure, interacts with CheA. Binds to a C-terminal pentapeptide sequence carried by certain receptors. In terms of processing, phosphorylated by CheA. Phosphorylation of the N-terminal regulatory domain activates the methylesterase activity.

Its subcellular location is the cytoplasm. It catalyses the reaction [protein]-L-glutamate 5-O-methyl ester + H2O = L-glutamyl-[protein] + methanol + H(+). The enzyme catalyses L-glutaminyl-[protein] + H2O = L-glutamyl-[protein] + NH4(+). Its activity is regulated as follows. Methylesterase activity is activated via phosphorylation in response to negative chemotactic stimuli and is inhibited in the presence of attractants. Activation requires both CheA and CheW. In terms of biological role, involved in chemotaxis. Part of a chemotaxis signal transduction system that modulates chemotaxis in response to various stimuli. Catalyzes the demethylation of specific methylglutamate residues introduced into the chemoreceptors (methyl-accepting chemotaxis proteins or MCP) by CheR. Also mediates the irreversible deamidation of specific glutamine residues to glutamic acid. Catalyzes its own deactivation by removing the activating phosphoryl group. In Escherichia coli (strain K12), this protein is Protein-glutamate methylesterase/protein-glutamine glutaminase.